We begin with the raw amino-acid sequence, 189 residues long: Ribulose bisphosphate carboxylase small subunit, chloroplastic (189 aa).

The N-terminal 66 residues, 1 to 66 (MASSIMALSS…KTTSNGSRVR (66 aa)), are a transit peptide targeting the chloroplast.

It belongs to the RuBisCO small chain family. Heterohexadecamer of 8 large and 8 small subunits.

It is found in the plastid. It localises to the chloroplast. Its function is as follows. RuBisCO catalyzes two reactions: the carboxylation of D-ribulose 1,5-bisphosphate, the primary event in carbon dioxide fixation, as well as the oxidative fragmentation of the pentose substrate. Both reactions occur simultaneously and in competition at the same active site. Although the small subunit is not catalytic it is essential for maximal activity. The sequence is that of Ribulose bisphosphate carboxylase small subunit, chloroplastic from Larix laricina (Tamarack).